The following is a 624-amino-acid chain: tRNA uridine 5-carboxymethylaminomethyl modification enzyme MnmG (624 aa).

An FAD-binding site is contributed by 14 to 19 (GAGHAG). Residue 273–287 (GTRYCPSFEDKVVRF) coordinates NAD(+).

Belongs to the MnmG family. As to quaternary structure, homodimer. Heterotetramer of two MnmE and two MnmG subunits. It depends on FAD as a cofactor.

The protein resides in the cytoplasm. Functionally, NAD-binding protein involved in the addition of a carboxymethylaminomethyl (cmnm) group at the wobble position (U34) of certain tRNAs, forming tRNA-cmnm(5)s(2)U34. The polypeptide is tRNA uridine 5-carboxymethylaminomethyl modification enzyme MnmG (Syntrophomonas wolfei subsp. wolfei (strain DSM 2245B / Goettingen)).